We begin with the raw amino-acid sequence, 3416 residues long: MAKGAVLKGKGGGPPRRVPKETAKKTRQGPGRLPNGLVLMRMMGVLWHMIAGTARSPILKRFWATVPVRQAIAALRKIRKTVGLLLDSLNRRRGKRRSTTGLLTSILLACLATLVISATIRRERTGDMVIRAEGKDAATQVEVVNGTCIILATDMGSWCDDSIMYECVTIDSGEEPVDVDCFCRGVERVSLEYGRCGKPVGGRSRRSVSIPVHAHSDLTGRGHKWLRGDSVKTHLTRVEGWVWKNKLLTMAFCAVVWMVTDSLPTRFIVITVALCLAPTYATRCTHLQNRDFVSGIQGTTRVSLVLELGGCVTLTAEGKPSVDVWLDDIHQENPAKTREYCLHAKLASSKVVARCPAMGPATLPEEHQASTVCRRDQSDRGWGNHCGLFGKGSIVACAKFACEAKKKATGYVYDVNKITYVVKVEPHTGDYLAANESHSNRKTASFTTQSEKTILTLGDYGDISLTCRVTSGVDPAQTVVLELDKTAEHLPKAWQVHRDWFEDLSLPWRHEGAHEWNHADRLVEFGEPHAVKMDIFNLGDQTGILLKSLAGVPVANIEGSKYHLQSGHVTCDVGLEKLKMKGMTYTVCEGSKFAWKRPPTDSGHDTVVMEVTYTGSKPCRIPVRAVAHGEPNVNVASLITPNPSMETTGGGFVELQLPPGDNIIYVGELSHQWFQKGSTIGRVLEKTRRGIERLTVVGEHAWDFGSVGGVLSSVGKALHTAFGAAFNTIFGGVGFLPRILLGVALAWLGLNSRNPTLSVGFLITGGLVLTMTLGVGADMGCAIDANRMELRCGEGLVVWREVTDWYDGYAFHPESPPVLAASLKEAYEEGVCGIVPQNRLEMAMWRRVEAVLNLALAESDANLTVVVDRRDPSDYRGGKVGILKRSGKEMKTSWKGWSQSFVWSVPESPRRFMVGIEGTGECPLDKRRTGVFTVAEFGMGMRTKIFLDLRETSSSDCDTGVMGAAVKSGHAVHTDQSLWMKSHRNATGVFISELIVTDLRNCTWPASHTLDNAGVVDSKLFLPVSLAGPRSHYNHIPGYAEQVRGPWNQTPLRVVREPCPGTTVKIDQNCDKRGSSLRSTTESGKAIPEWCCRTCELPPVTFRSGTDCWYAMEIRPVHQQGGLVRSMVLADNGAMLSEGGVPGIVAVFVVLELVIRRRPTTGTSVVWCGVVVLGLVVTGLVTIEGLCRYVVAVGILMSMELGPEIVALVLLQAVFDMRTGLLVAFAVKRAYTTREAVVTYFLLLVLELGFPEASLSNIWKWADSLAMGTLILQACSQEGRARVGYLLAAMMTQKDMAIIHTGLTIFLSAATAMAVWSMIKGQRDQKGLSWATPLVGLFGGEGVGLRLLAFRRLAERRNRRSFSEPLTVVGVMLTVASGMVRHTSQEALCALVAGAFLLLMMVLGTRKMQLIAEWCGEVEWNPDLVNEGGEVNLKVRQDAMGNLHLTEVEKEERAMALWLLAGLVASAFHWAGILIVLAIWTFFEMLSSGRRSELVFSGQGTRTERNRPFEIKDGAYRIYSPGLLWGHRQIGVGYGAKGVLHTMWHVTRGAALVVEEAISGPYWADVREDVVCYGGAWSLESRWRGETVQVHAFPPGRPQETHQCQPGELILENGRKLGAVPIDLSKGTSGSPIINAQGEVVGLYGNGLKTNEAYVSSIAQGEAEKSRPELPLSVQGTGWMSKGQITVLDMHPGSGKTHRVLPELVRQCANRGMRTLVLAPTRVVLKEMEKALAGKKVRFHSPAVEGQSTAGAVVDVMCHATYVHRRLLPQGRQNWEVAIMDEAHWTDPHSIAARGHLYSLAKENRCALVLMTATPPGRGDPFPESNGAIMSEERAIPDGEWREGFDWITEYEGRTAWFVPSISKGGAIARTLRQRGKSVICLNSKTFEKDYLRVREEKPDFVVTTDISEMGANLDVSRVIDGRTNIKPEEVDGKVEMTGTRKITTASAAQRRGRVGRTSGRTDEYIYSGQCDDDDTSLVQWKEAQILLDNITTLRGPVATFYGPEQMKMPEVAGHYRLNEEKRKHFRHLMTQCDFTPWLAWHVATNTSNVLDRSWTWQGPEGNAIDGADGDLVRFKTPGGSERVLQPVWKDCRMFREGRDVKDFILYASGRRSVGDVLGGLAGVPGLLRHRCASALDVVYTLLNENPGSRAMRMAERDAPEAFLTIVEVAVLGVATLGILWCFVARTSVSRMFLGTVVLFAALLLLWIGGVDYGYMAGIALIFYIFLTVLQPEPGKQRSSDDNRLAYFLLGLLSLAGLVTANEMGMLDKTKADLAGLMWHGEQRHPAWEEWTNVDIQPARSWGTYVLIVSLFTPYMLHQLQTKIQQLVNSSVASGAQAMRDLGGGTPFFGVAGHVIALGVTSLVGATPLSLGLGVALAAFHLAIVASGLEAELTQRAHRVFFSAMVKNPMVDGDVINPFPDGEPKPVLYERRMSLILAIALCMVSVVLNRTAASMTEAGAVGLAALGQLVHPETETLWTMPMACGMAGLVRGSFWGLLPMGHRLWLKTTGTRRGGADGETLGDIWKRRLNGCSREEFFQYRRSGVMETERDRARELLKRGETNMGLAVSRGTAKLAWLEERGYATLKGEVVDLGCGRGGWSYYAASRPAVMGVKAYTIGGKGHEVPRLITSLGWNLIKFRTGMDVYSLEAHRADTILCDIGESNPDPLVEGERSRRVILLMEKWKLRNPDASCVFKVLAPYRPEVLEALHRFQLQWGGGLVRVPFSRNSTHEMYFSTAVSGNIVNSVNIQSRKLLARFGDQRGPAKVPEVDLGTGTRCVVLAEDKVREADVAERITALKTQYGDSWHVDKEHPYRTWQYWGSYKTEATGSAASLINGVVKLLSWPWNAREDVVRMAMTDTTAFGQQRVFKEKVDTKAQEPQVGTKIIMRAVNDWILERLAGKKTPRLCTREEFIAKVRSNAALGAWSDEQNRWSNAREAVEDPEFWRLVDEERERHLRGRCAQCVYNMMGKREKKLGEFGVAKGSRAIWYMWLGSRYLEFEALGFLNEDHWASRDLSGAGVEGISLNYLGWHLKRLSELEGGLFYADDTAGWDTRITNADLEDEEQILRYLRGEHRTLAKTILEKAYHAKVVKVARPSSSGGCVMDIITRRDQRGSGQVVTYALNTLTNIKVQLIRMMEGEGVIGPSDSQDPRLLRVEAWLKEYGEERLTRMLVSGDDCVVRPIDDRFGKALYFLNDMAKVRKDIGEWEPSEGYSSWEEVPFCSHHFHELTMKDGRVIIVPCRDQDELVGRARVSPGCGWSVRETACLSKAYGQMWLLSYFHRRDLRTLGLAICSAVPIDWVPQGRTTWSIHASGAWMTTEDMLEVWNRVWILDNPFMSDKGKVKEWRDIPYLPKSQDGLCSSLVGRRERAEWAKNIWGSVEKVRRMIGPERYADYLSCMDRHELHWDLKLESNII.

The interval Met1–Pro34 is disordered. The Cytoplasmic portion of the chain corresponds to Met1–Thr99. A propeptide spans Arg97–Ser117 (ER anchor for the capsid protein C, removed in mature form by serine protease NS3). A helical membrane pass occupies residues Thr100–Ile120. Over Arg121 to Trp243 the chain is Extracellular. A glycan (N-linked (GlcNAc...) asparagine; by host) is linked at Asn145. A helical membrane pass occupies residues Lys244–Asp261. Residue Ser262 is a topological domain, cytoplasmic. The chain crosses the membrane as a helical span at residues Leu263–Ala281. Topologically, residues Thr282–Thr728 are extracellular. Disulfide bonds link Cys284–Cys311, Cys341–Cys397, Cys341–Cys402, Cys355–Cys386, Cys373–Cys397, and Cys373–Cys402. The interval Asp379 to Gly392 is fusion peptide. N-linked (GlcNAc...) asparagine; by host glycosylation is present at Asn435. 2 disulfide bridges follow: Cys467/Cys571 and Cys588/Cys619. A helical transmembrane segment spans residues Ile729–Gly749. The Cytoplasmic segment spans residues Leu750–Thr756. The chain crosses the membrane as a helical span at residues Leu757 to Ala777. Topologically, residues Asp778–Ala1134 are extracellular. Disulfide bonds link Cys781/Cys792, Cys832/Cys922, Cys957/Cys1002, Cys1059/Cys1108, Cys1070/Cys1092, and Cys1091/Cys1095. Residues Asn862, Asn985, and Asn1001 are each glycosylated (N-linked (GlcNAc...) asparagine; by host). The helical transmembrane segment at Met1135–Ile1155 threads the bilayer. At Arg1156 to Gly1162 the chain is on the cytoplasmic side. A helical membrane pass occupies residues Thr1163 to Ile1183. Residues Glu1184–Tyr1189 lie on the Lumenal side of the membrane. A helical membrane pass occupies residues Val1190–Leu1210. The Cytoplasmic segment spans residues Leu1211–Glu1235. The helical transmembrane segment at Ala1236–Ser1256 threads the bilayer. The Lumenal portion of the chain corresponds to Asn1257–Asp1295. Residues Met1296–Trp1316 traverse the membrane as a helical segment. The Cytoplasmic portion of the chain corresponds to Ser1317 to Ser1361. Residues Phe1362–Met1379 form a helical membrane-spanning segment. Topologically, residues Val1380–Ser1384 are lumenal. Residues Gln1385–Thr1405 form a helical membrane-spanning segment. The Cytoplasmic segment spans residues Arg1406–Trp1458. Positions Ala1412–Glu1451 are interacts with and activates NS3 protease. The segment at residues Leu1459 to Ile1479 is an intramembrane region (helical). Over Trp1480–Ala2162 the chain is Cytoplasmic. In terms of domain architecture, Peptidase S7 spans Ser1492–Pro1671. Catalysis depends on charge relay system; for serine protease NS3 activity residues His1545, Asp1569, and Ser1629. In terms of domain architecture, Helicase ATP-binding spans Thr1677–Glu1833. Position 1690-1697 (Met1690–Thr1697) interacts with ATP. Positions Asp1781 to His1784 match the DEAH box motif. The 159-residue stretch at Gly1844–Tyr2002 folds into the Helicase C-terminal domain. An N6-acetyllysine; by host modification is found at Lys1885. The chain crosses the membrane as a helical span at residues Phe2163 to Phe2183. The Lumenal segment spans residues Val2184–Arg2191. An intramembrane region (helical) is located at residues Met2192–Val2211. Position 2212 (Asp2212) is a topological domain, lumenal. The chain crosses the membrane as a helical span at residues Tyr2213–Glu2233. Residues Pro2234–Ala2246 lie on the Cytoplasmic side of the membrane. Residues Tyr2247 to Leu2267 traverse the membrane as a helical segment. Residues Asp2268–Ser2301 are Lumenal-facing. Positions Trp2302–Thr2322 form an intramembrane region, helical. Over Lys2323–Gly2345 the chain is Lumenal. Positions Thr2346 to Ala2366 form an intramembrane region, helical. The Lumenal segment spans residues Thr2367–Pro2368. The chain crosses the membrane as a helical span at residues Leu2369–Leu2389. Residues Glu2390–Arg2432 are Cytoplasmic-facing. A helical membrane pass occupies residues Met2433–Ala2453. At Ser2454–Thr2476 the chain is on the lumenal side. A helical transmembrane segment spans residues Leu2477–Leu2497. The Cytoplasmic portion of the chain corresponds to Leu2498 to Ile3416. Residues Gly2514 to Cys2778 enclose the mRNA cap 0-1 NS5-type MT domain. Ser2569 contacts S-adenosyl-L-methionine. Ser2569 carries the post-translational modification Phosphoserine. Lys2574 (for 2'-O-MTase activity) is an active-site residue. Gly2599, Trp2600, Thr2617, Ile2618, Asp2644, and Val2645 together coordinate S-adenosyl-L-methionine. The active-site For 2'-O-MTase activity is Asp2659. Ile2660 provides a ligand contact to S-adenosyl-L-methionine. Catalysis depends on for 2'-O-MTase activity residues Lys2696 and Glu2732. Residues Glu2732–Ser2736 form an interaction with host SCRIB region. Residue Tyr2734 participates in S-adenosyl-L-methionine binding. Zn(2+) contacts are provided by Glu2952, His2956, Cys2961, and Cys2964. The region spanning Gly3042–Ala3191 is the RdRp catalytic domain. Residues His3226, Cys3242, and Cys3361 each coordinate Zn(2+).

It in the N-terminal section; belongs to the class I-like SAM-binding methyltransferase superfamily. mRNA cap 0-1 NS5-type methyltransferase family. In terms of assembly, homodimer. Interacts (via N-terminus) with host EXOC1 (via C-terminus); this interaction results in EXOC1 degradation through the proteasome degradation pathway. As to quaternary structure, forms heterodimers with envelope protein E in the endoplasmic reticulum and Golgi. Homodimer; in the endoplasmic reticulum and Golgi. Interacts with protein prM. Interacts with non-structural protein 1. In terms of assembly, homodimer; Homohexamer when secreted. Interacts with envelope protein E. As to quaternary structure, interacts (via N-terminus) with serine protease NS3. Forms a heterodimer with serine protease NS3. May form homooligomers. In terms of assembly, forms a heterodimer with NS2B. Interacts with NS4B. Interacts with unphosphorylated RNA-directed RNA polymerase NS5; this interaction stimulates RNA-directed RNA polymerase NS5 guanylyltransferase activity. As to quaternary structure, interacts with serine protease NS3. Homodimer. Interacts with host STAT2; this interaction inhibits the phosphorylation of the latter, and, when all viral proteins are present (polyprotein), targets STAT2 for degradation. Interacts with serine protease NS3. Specific enzymatic cleavages in vivo yield mature proteins. Cleavages in the lumen of endoplasmic reticulum are performed by host signal peptidase, whereas cleavages in the cytoplasmic side are performed by serine protease NS3. Signal cleavage at the 2K-4B site requires a prior NS3 protease-mediated cleavage at the 4A-2K site. Post-translationally, cleaved in post-Golgi vesicles by a host furin, releasing the mature small envelope protein M, and peptide pr. This cleavage is incomplete as up to 30% of viral particles still carry uncleaved prM. In terms of processing, N-glycosylated. N-glycosylated. The excreted form is glycosylated and this is required for efficient secretion of the protein from infected cells. Post-translationally, acetylated by host KAT5. Acetylation modulates NS3 RNA-binding and unwinding activities and plays an important positive role for viral replication. In terms of processing, phosphorylated on serines residues. This phosphorylation may trigger NS5 nuclear localization.

The protein localises to the virion. It localises to the host nucleus. It is found in the host cytoplasm. Its subcellular location is the host perinuclear region. The protein resides in the secreted. The protein localises to the virion membrane. It localises to the host endoplasmic reticulum membrane. It catalyses the reaction Selective hydrolysis of -Xaa-Xaa-|-Yaa- bonds in which each of the Xaa can be either Arg or Lys and Yaa can be either Ser or Ala.. It carries out the reaction RNA(n) + a ribonucleoside 5'-triphosphate = RNA(n+1) + diphosphate. The enzyme catalyses a ribonucleoside 5'-triphosphate + H2O = a ribonucleoside 5'-diphosphate + phosphate + H(+). The catalysed reaction is ATP + H2O = ADP + phosphate + H(+). It catalyses the reaction a 5'-end (5'-triphosphoguanosine)-ribonucleoside in mRNA + S-adenosyl-L-methionine = a 5'-end (N(7)-methyl 5'-triphosphoguanosine)-ribonucleoside in mRNA + S-adenosyl-L-homocysteine. It carries out the reaction a 5'-end (N(7)-methyl 5'-triphosphoguanosine)-ribonucleoside in mRNA + S-adenosyl-L-methionine = a 5'-end (N(7)-methyl 5'-triphosphoguanosine)-(2'-O-methyl-ribonucleoside) in mRNA + S-adenosyl-L-homocysteine + H(+). Its function is as follows. Plays a role in virus budding by binding to the cell membrane and gathering the viral RNA into a nucleocapsid that forms the core of a mature virus particle. During virus entry, may induce genome penetration into the host cytoplasm after hemifusion induced by the surface proteins. Can migrate to the cell nucleus where it modulates host functions. In terms of biological role, inhibits RNA silencing by interfering with host Dicer. Functionally, prevents premature fusion activity of envelope proteins in trans-Golgi by binding to envelope protein E at pH6.0. After virion release in extracellular space, gets dissociated from E dimers. Acts as a chaperone for envelope protein E during intracellular virion assembly by masking and inactivating envelope protein E fusion peptide. prM is the only viral peptide matured by host furin in the trans-Golgi network probably to avoid catastrophic activation of the viral fusion activity in acidic Golgi compartment prior to virion release. prM-E cleavage is inefficient, and many virions are only partially matured. These uncleaved prM would play a role in immune evasion. Its function is as follows. May play a role in virus budding. Exerts cytotoxic effects by activating a mitochondrial apoptotic pathway through M ectodomain. May display a viroporin activity. In terms of biological role, binds to host cell surface receptor and mediates fusion between viral and cellular membranes. Envelope protein is synthesized in the endoplasmic reticulum in the form of heterodimer with protein prM. They play a role in virion budding in the ER, and the newly formed immature particle is covered with 60 spikes composed of heterodimer between precursor prM and envelope protein E. The virion is transported to the Golgi apparatus where the low pH causes dissociation of PrM-E heterodimers and formation of E homodimers. prM-E cleavage is inefficient, and many virions are only partially matured. These uncleaved prM would play a role in immune evasion. Functionally, involved in immune evasion, pathogenesis and viral replication. Once cleaved off the polyprotein, is targeted to three destinations: the viral replication cycle, the plasma membrane and the extracellular compartment. Essential for viral replication. Required for formation of the replication complex and recruitment of other non-structural proteins to the ER-derived membrane structures. Excreted as a hexameric lipoparticle that plays a role against host immune response. Antagonizing the complement function. Binds to the host macrophages and dendritic cells. Inhibits signal transduction originating from Toll-like receptor 3 (TLR3). Component of the viral RNA replication complex that functions in virion assembly and antagonizes the host immune response. Its function is as follows. Required cofactor for the serine protease function of NS3. May have membrane-destabilizing activity and form viroporins. In terms of biological role, displays three enzymatic activities: serine protease, NTPase and RNA helicase. NS3 serine protease, in association with NS2B, performs its autocleavage and cleaves the polyprotein at dibasic sites in the cytoplasm: C-prM, NS2A-NS2B, NS2B-NS3, NS3-NS4A, NS4A-2K and NS4B-NS5. NS3 RNA helicase binds RNA and unwinds dsRNA in the 3' to 5' direction. Functionally, regulates the ATPase activity of the NS3 helicase activity. NS4A allows NS3 helicase to conserve energy during unwinding. Functions as a signal peptide for NS4B and is required for the interferon antagonism activity of the latter. Its function is as follows. Induces the formation of ER-derived membrane vesicles where the viral replication takes place. Inhibits interferon (IFN)-induced host STAT1 phosphorylation and nuclear translocation, thereby preventing the establishment of cellular antiviral state by blocking the IFN-alpha/beta pathway. Inhibits STAT2 translocation in the nucleus after IFN-alpha treatment. In terms of biological role, replicates the viral (+) and (-) RNA genome, and performs the capping of genomes in the cytoplasm. NS5 methylates viral RNA cap at guanine N-7 and ribose 2'-O positions. Besides its role in RNA genome replication, also prevents the establishment of cellular antiviral state by blocking the interferon-alpha/beta (IFN-alpha/beta) signaling pathway. Inhibits host TYK2 and STAT2 phosphorylation, thereby preventing activation of JAK-STAT signaling pathway. The polypeptide is Genome polyprotein (Homo sapiens (Human)).